We begin with the raw amino-acid sequence, 361 residues long: MAGNTLGQLFRVTTFGESHGLALGCIVDGVPPGIPLTEADLQHDLDRRRPGTSRYTTQRREPDQVKILSGVFEGVTTGTSIGLLIENTDQRSQDYSAIKDVFRPGHADYTYEQKYGLRDYRGGGRSSARETAMRVAAGAIAKKYLAEKHGIVIQGCLTQMGDIPLEIKDWQQVEQNPFFCPDPDKIDALDELMRALKKEGDSIGAKVTVVANGVPAGLGEPVFDRLDADIAHALMSINAVKGVEIGDGFDVVALRGSQNRDEITKEGFLSNHAGGILGGISSGQQIVAHMALKPTSSITVPGRTINRFGEEVEMITKGRHDPCVGIRAVPIAEAMLAIVLMDHLLRQRAQNADVKTDIPRW.

NADP(+) is bound by residues arginine 48 and arginine 54. Residues 125-127 (RSS), 238-239 (NA), glycine 278, 293-297 (KPTSS), and arginine 319 each bind FMN.

This sequence belongs to the chorismate synthase family. As to quaternary structure, homotetramer. FMNH2 is required as a cofactor.

It carries out the reaction 5-O-(1-carboxyvinyl)-3-phosphoshikimate = chorismate + phosphate. The protein operates within metabolic intermediate biosynthesis; chorismate biosynthesis; chorismate from D-erythrose 4-phosphate and phosphoenolpyruvate: step 7/7. In terms of biological role, catalyzes the anti-1,4-elimination of the C-3 phosphate and the C-6 proR hydrogen from 5-enolpyruvylshikimate-3-phosphate (EPSP) to yield chorismate, which is the branch point compound that serves as the starting substrate for the three terminal pathways of aromatic amino acid biosynthesis. This reaction introduces a second double bond into the aromatic ring system. This Citrobacter koseri (strain ATCC BAA-895 / CDC 4225-83 / SGSC4696) protein is Chorismate synthase.